We begin with the raw amino-acid sequence, 202 residues long: Small ribosomal subunit protein uS4c (202 aa).

Residues 90–153 (MRLDNIIFRL…KSQAIISKNL (64 aa)) form the S4 RNA-binding domain.

This sequence belongs to the universal ribosomal protein uS4 family. In terms of assembly, part of the 30S ribosomal subunit. Contacts protein S5. The interaction surface between S4 and S5 is involved in control of translational fidelity.

The protein localises to the plastid. The protein resides in the chloroplast. In terms of biological role, one of the primary rRNA binding proteins, it binds directly to 16S rRNA where it nucleates assembly of the body of the 30S subunit. Its function is as follows. With S5 and S12 plays an important role in translational accuracy. The protein is Small ribosomal subunit protein uS4c (rps4) of Rosulabryum capillare (Capillary thread-moss).